Reading from the N-terminus, the 76-residue chain is Kappa-actitoxin-Avd4o (76 aa).

Residues 1–19 form the signal peptide; the sequence is MNKALFLSLVVLCAAVVFA. Residues 20 to 33 constitute a propeptide that is removed on maturation; sequence AEDLQKAKHAPFKL. 3 disulfides stabilise this stretch: C37/C72, C39/C65, and C55/C73.

This sequence belongs to the sea anemone type 3 (BDS) potassium channel toxin family. In terms of tissue distribution, experimental results show no expression in the ectodermal tissue from the distal and proximal tentacles, body wall, and oral disk. Since paralogs are expressed in this tissue, an expression of this toxin in this tissue is probable. The negative results could be explained by the very low abundance of EST sequences.

It localises to the secreted. It is found in the nematocyst. In terms of biological role, blocks Kv3 voltage-gated potassium channels. Reduces blood pressure. The protein is Kappa-actitoxin-Avd4o of Anemonia viridis (Snakelocks anemone).